We begin with the raw amino-acid sequence, 244 residues long: Type III pantothenate kinase (244 aa).

11–18 (DAGNTSIK) lines the ATP pocket. Substrate-binding positions include Y90 and 97–100 (GIDR). The active-site Proton acceptor is the D99. D119 provides a ligand contact to K(+). T122 contacts ATP. Residue T175 coordinates substrate.

Belongs to the type III pantothenate kinase family. In terms of assembly, homodimer. The cofactor is NH4(+). K(+) is required as a cofactor.

Its subcellular location is the cytoplasm. The catalysed reaction is (R)-pantothenate + ATP = (R)-4'-phosphopantothenate + ADP + H(+). It functions in the pathway cofactor biosynthesis; coenzyme A biosynthesis; CoA from (R)-pantothenate: step 1/5. In terms of biological role, catalyzes the phosphorylation of pantothenate (Pan), the first step in CoA biosynthesis. The polypeptide is Type III pantothenate kinase (Marinomonas sp. (strain MWYL1)).